The chain runs to 209 residues: Uracil phosphoribosyltransferase (209 aa).

Residues Arg79, Arg104, and 131–139 (DPMLATGGS) each bind 5-phospho-alpha-D-ribose 1-diphosphate. Uracil contacts are provided by residues Ile194 and 199–201 (GDA). Position 200 (Asp200) interacts with 5-phospho-alpha-D-ribose 1-diphosphate.

This sequence belongs to the UPRTase family. The cofactor is Mg(2+).

The catalysed reaction is UMP + diphosphate = 5-phospho-alpha-D-ribose 1-diphosphate + uracil. It functions in the pathway pyrimidine metabolism; UMP biosynthesis via salvage pathway; UMP from uracil: step 1/1. With respect to regulation, allosterically activated by GTP. In terms of biological role, catalyzes the conversion of uracil and 5-phospho-alpha-D-ribose 1-diphosphate (PRPP) to UMP and diphosphate. The polypeptide is Uracil phosphoribosyltransferase (Exiguobacterium sp. (strain ATCC BAA-1283 / AT1b)).